Consider the following 221-residue polypeptide: Adenylate kinase (221 aa).

Position 10–15 (10–15 (GAGKGT)) interacts with ATP. The segment at 30 to 59 (STGDMLRAAVKAGTPLGLEAKRYMDAGELV) is NMP. Residues Thr-31, Arg-36, 57–59 (ELV), 85–88 (GFPR), and Gln-92 contribute to the AMP site. An LID region spans residues 122 to 159 (GRRMHPASGRTYHVKFNPPKVEGVDDVTGEPLIQRDDD). Residues Arg-123 and 132 to 133 (TY) each bind ATP. Positions 156 and 167 each coordinate AMP. Gly-207 contributes to the ATP binding site.

It belongs to the adenylate kinase family. In terms of assembly, monomer.

Its subcellular location is the cytoplasm. It catalyses the reaction AMP + ATP = 2 ADP. Its pathway is purine metabolism; AMP biosynthesis via salvage pathway; AMP from ADP: step 1/1. In terms of biological role, catalyzes the reversible transfer of the terminal phosphate group between ATP and AMP. Plays an important role in cellular energy homeostasis and in adenine nucleotide metabolism. The chain is Adenylate kinase from Paraburkholderia phymatum (strain DSM 17167 / CIP 108236 / LMG 21445 / STM815) (Burkholderia phymatum).